An 851-amino-acid chain; its full sequence is DNA mismatch repair protein MutS (851 aa).

602–609 (GPNMSGKS) contacts ATP.

This sequence belongs to the DNA mismatch repair MutS family.

Its function is as follows. This protein is involved in the repair of mismatches in DNA. It is possible that it carries out the mismatch recognition step. This protein has a weak ATPase activity. The protein is DNA mismatch repair protein MutS of Streptococcus pyogenes serotype M2 (strain MGAS10270).